A 451-amino-acid chain; its full sequence is Porin AaxA (451 aa).

A signal peptide spans 1–27; it reads MASFHSSLLTALCTLCTYGILTMPAYG.

Belongs to the OprB family.

It localises to the cell outer membrane. Facilitates L-arginine uptake, as part of the AaxABC system. The arginine uptake by the bacterium in the macrophage may be a virulence factor against the host innate immune response. The polypeptide is Porin AaxA (aaxA) (Chlamydia caviae (strain ATCC VR-813 / DSM 19441 / 03DC25 / GPIC) (Chlamydophila caviae)).